A 1312-amino-acid polypeptide reads, in one-letter code: Tetratricopeptide repeat protein 21B (1312 aa).

6 TPR repeats span residues 4-38, 110-143, 147-180, 182-213, 214-247, and 325-358; these read TDHYITAGIIYYCQEKYHQHVQNLAREGLKKYSND, PKALYYAGMFLWLMGRTDKAREYIDRMLKISNRS, LVLRGWLDLSSEKESTVNKSIRYFEEGIQDNKDI, ALIGKAQYFMAHQNYSGALDVINQIIVNYPPF, LPALTLKMRLFLAQQDWDQTLETAQRILLKDGAN, and AEVATALANNFILQGNVTEAAGWYATAMKLDGNH. A coiled-coil region spans residues 365–392; that stretch reads VIQCQILQGQLEEAEQQLDFLHEIQESI. 16 TPR repeats span residues 493–526, 528–560, 564–597, 615–648, 720–753, 755–787, 789–820, 829–861, 881–914, 916–947, 948–981, 983–1015, 1019–1052, 1193–1226, 1228–1260, and 1262–1295; these read TEPLYYTAQIKYLAGNLEGAQGSLQRCIEVDTAC, DFHLLMAQIHYAQGKFAECSVSLETGVSHNFKV, PLYHLIRARVLRKTGELQEAIKTLKMTMSLQEMK, VSIYLELAELLRLNGEQHEATKIIQDAINEFGGT, PHTSVLLGDALMNIQEPEKALEVYNEALHKNPQD, SLANRIGQALIKTHQYKKAVNYYEAAQKISGQD, LCCDLAELLIKLKQYSKAEAVLKQALAHEPVS, AKCLGLLGTTYQNYKKEESADILNKALELQQRI, SEICVQLAEHYVDQRNYEQAANYYKEAMVYSQDS, VKLQLSRLYLMMGDLDSCENHCSALLENHSFK, EEAAMMMADVMFRKQDYTKSIELFDQILEENPDN, AVLSKLIDLLRRSGNLSKAPMFFEKALANSSRT, PGYNYCKGLYCWYLGQPNDGLKYFNKARKDSEWG, EKSWLLLADVYIKLGKYDIATELLKRCLLYNKSC, KAYEYLGFIMENEQSYKDAAANYRLAWDYSNQS, and PAVGFRLAFNYLKDKKYVDAIDICHKVLKAHPTY.

This sequence belongs to the TTC21 family. As to quaternary structure, component of the IFT complex A (IFT-A).

In terms of biological role, component of the IFT complex A (IFT-A), a complex required for retrograde ciliary transport and entry into cilia of G protein-coupled receptors (GPCRs). Negatively modulates the SHH signal transduction. The polypeptide is Tetratricopeptide repeat protein 21B (ttc21b) (Xenopus laevis (African clawed frog)).